A 721-amino-acid chain; its full sequence is Fatty acid oxidation complex subunit alpha (721 aa).

Residues 1-190 (MIYEGKAITV…KVGAVDAVVA (190 aa)) are enoyl-CoA hydratase/isomerase. Asp297 contributes to the substrate binding site. The segment at 312–721 (KDVKQAAVLG…SFFGQASSEE (410 aa)) is 3-hydroxyacyl-CoA dehydrogenase. NAD(+) contacts are provided by residues Met325, Asp344, 401 to 403 (VVE), Lys408, and Ser430. Catalysis depends on His451, which acts as the For 3-hydroxyacyl-CoA dehydrogenase activity. Asn454 lines the NAD(+) pocket. Substrate is bound by residues Asn501 and Tyr660.

In the N-terminal section; belongs to the enoyl-CoA hydratase/isomerase family. It in the C-terminal section; belongs to the 3-hydroxyacyl-CoA dehydrogenase family. In terms of assembly, heterotetramer of two alpha chains (FadB) and two beta chains (FadA).

The catalysed reaction is a (3S)-3-hydroxyacyl-CoA + NAD(+) = a 3-oxoacyl-CoA + NADH + H(+). It carries out the reaction a (3S)-3-hydroxyacyl-CoA = a (2E)-enoyl-CoA + H2O. It catalyses the reaction a 4-saturated-(3S)-3-hydroxyacyl-CoA = a (3E)-enoyl-CoA + H2O. The enzyme catalyses (3S)-3-hydroxybutanoyl-CoA = (3R)-3-hydroxybutanoyl-CoA. The catalysed reaction is a (3Z)-enoyl-CoA = a 4-saturated (2E)-enoyl-CoA. It carries out the reaction a (3E)-enoyl-CoA = a 4-saturated (2E)-enoyl-CoA. Its pathway is lipid metabolism; fatty acid beta-oxidation. In terms of biological role, involved in the aerobic and anaerobic degradation of long-chain fatty acids via beta-oxidation cycle. Catalyzes the formation of 3-oxoacyl-CoA from enoyl-CoA via L-3-hydroxyacyl-CoA. It can also use D-3-hydroxyacyl-CoA and cis-3-enoyl-CoA as substrate. This Pseudomonas syringae pv. syringae (strain B728a) protein is Fatty acid oxidation complex subunit alpha.